A 235-amino-acid polypeptide reads, in one-letter code: 7-cyano-7-deazaguanine synthase (235 aa).

Phenylalanine 12–leucine 22 is an ATP binding site. Residues cysteine 200, cysteine 215, cysteine 218, and cysteine 221 each contribute to the Zn(2+) site.

It belongs to the QueC family. The cofactor is Zn(2+).

The catalysed reaction is 7-carboxy-7-deazaguanine + NH4(+) + ATP = 7-cyano-7-deazaguanine + ADP + phosphate + H2O + H(+). It functions in the pathway purine metabolism; 7-cyano-7-deazaguanine biosynthesis. Functionally, catalyzes the ATP-dependent conversion of 7-carboxy-7-deazaguanine (CDG) to 7-cyano-7-deazaguanine (preQ(0)). In Methylibium petroleiphilum (strain ATCC BAA-1232 / LMG 22953 / PM1), this protein is 7-cyano-7-deazaguanine synthase.